The following is a 907-amino-acid chain: Translation initiation factor IF-2 (907 aa).

Residues 26–317 form a disordered region; the sequence is DAGMKKSSSD…KPKSMQHGFD (292 aa). 2 stretches are compositionally biased toward basic and acidic residues: residues 28–44 and 101–248; these read GMKK…EKQK and SAIE…DTDY. The segment covering 299-308 has biased composition (basic residues); the sequence is KGGRKGKLSK. A tr-type G domain is found at 406 to 575; sequence PRAPVVTIMG…LLQAEVLELT (170 aa). Residues 415-422 form a G1 region; that stretch reads GHVDHGKT. Residue 415–422 participates in GTP binding; sequence GHVDHGKT. The G2 stretch occupies residues 440-444; that stretch reads GITQH. Residues 461–464 are G3; it reads DTPG. Residues 461–465 and 515–518 each bind GTP; these read DTPGH and NKID. The tract at residues 515 to 518 is G4; that stretch reads NKID. Residues 551-553 are G5; that stretch reads SAK.

It belongs to the TRAFAC class translation factor GTPase superfamily. Classic translation factor GTPase family. IF-2 subfamily.

It is found in the cytoplasm. Its function is as follows. One of the essential components for the initiation of protein synthesis. Protects formylmethionyl-tRNA from spontaneous hydrolysis and promotes its binding to the 30S ribosomal subunits. Also involved in the hydrolysis of GTP during the formation of the 70S ribosomal complex. The chain is Translation initiation factor IF-2 from Vibrio vulnificus (strain CMCP6).